The primary structure comprises 320 residues: ADP-L-glycero-D-manno-heptose-6-epimerase (320 aa).

NADP(+) contacts are provided by residues 10-11 (FI), 31-32 (DN), Lys38, Lys53, 75-79 (LGACS), and Asn92. Catalysis depends on Tyr139, which acts as the Proton acceptor. Lys143 is an NADP(+) binding site. Asn168 serves as a coordination point for substrate. The NADP(+) site is built by Val169 and Lys177. Lys177 serves as the catalytic Proton acceptor. Substrate-binding positions include Gly179, His186, 200–203 (FEGS), Arg213, and Tyr277.

This sequence belongs to the NAD(P)-dependent epimerase/dehydratase family. HldD subfamily. Homopentamer. NADP(+) is required as a cofactor.

The enzyme catalyses ADP-D-glycero-beta-D-manno-heptose = ADP-L-glycero-beta-D-manno-heptose. It participates in nucleotide-sugar biosynthesis; ADP-L-glycero-beta-D-manno-heptose biosynthesis; ADP-L-glycero-beta-D-manno-heptose from D-glycero-beta-D-manno-heptose 7-phosphate: step 4/4. Catalyzes the interconversion between ADP-D-glycero-beta-D-manno-heptose and ADP-L-glycero-beta-D-manno-heptose via an epimerization at carbon 6 of the heptose. The chain is ADP-L-glycero-D-manno-heptose-6-epimerase from Alkalilimnicola ehrlichii (strain ATCC BAA-1101 / DSM 17681 / MLHE-1).